A 283-amino-acid polypeptide reads, in one-letter code: MSNLFMTATQLHPSKQLKKLQARLRGLVGKAIRDYNLIEAGDRIMVCLSGGKDSYTLLDILLHLQRAAPIDFEILAVNLDQKQPNFPEQVLPNYLNQLQVPYRIVEEDTYSTVKRVIPEGKTMCGLCSRLRRGILYRVAQEEQATKIALGHHREDIIETLFLNLFHAGKLEAMPPKLLSDNRQHMVIRPLAYCPEADIQRYADLRQFPIIPCTLCGSQETLQRVQVKQMLQAWEQETPGRLETIFRSLQNIELSQLADPQLFDFAHLAIAATPYADSPDRSGL.

The short motif at 49–54 (SGGKDS) is the PP-loop motif element. 3 residues coordinate [4Fe-4S] cluster: Cys-124, Cys-127, and Cys-215.

The protein belongs to the TtcA family. As to quaternary structure, homodimer. It depends on Mg(2+) as a cofactor. [4Fe-4S] cluster serves as cofactor.

It localises to the cytoplasm. The enzyme catalyses cytidine(32) in tRNA + S-sulfanyl-L-cysteinyl-[cysteine desulfurase] + AH2 + ATP = 2-thiocytidine(32) in tRNA + L-cysteinyl-[cysteine desulfurase] + A + AMP + diphosphate + H(+). It functions in the pathway tRNA modification. Functionally, catalyzes the ATP-dependent 2-thiolation of cytidine in position 32 of tRNA, to form 2-thiocytidine (s(2)C32). The sulfur atoms are provided by the cysteine/cysteine desulfurase (IscS) system. The polypeptide is tRNA-cytidine(32) 2-sulfurtransferase (Acaryochloris marina (strain MBIC 11017)).